We begin with the raw amino-acid sequence, 213 residues long: Kynurenine formamidase (213 aa).

Trp-18 provides a ligand contact to substrate. Residues His-48, His-52, and Asp-54 each contribute to the Zn(2+) site. His-58 serves as the catalytic Proton donor/acceptor. Zn(2+) contacts are provided by His-160 and Glu-172.

Belongs to the Cyclase 1 superfamily. KynB family. As to quaternary structure, homodimer. The cofactor is Zn(2+).

The catalysed reaction is N-formyl-L-kynurenine + H2O = L-kynurenine + formate + H(+). It participates in amino-acid degradation; L-tryptophan degradation via kynurenine pathway; L-kynurenine from L-tryptophan: step 2/2. Functionally, catalyzes the hydrolysis of N-formyl-L-kynurenine to L-kynurenine, the second step in the kynurenine pathway of tryptophan degradation. This chain is Kynurenine formamidase, found in Burkholderia ambifaria (strain MC40-6).